We begin with the raw amino-acid sequence, 442 residues long: uncharacterized protein (442 aa).

The next 7 helical transmembrane spans lie at 209–229 (FNIWTHLSAFIVFFAVLAYFY), 247–267 (IFFLLSAMKCLGCSVIWHTFS), 284–304 (VGISALIAASIISVEYHAFVC), 308–328 (LRFIFIAFTGTLGLIGIYTPW), 342–362 (IFFFVGLACSGLIPMITMFYI), 374–394 (PVFKSIFSYIIGVLFYGLHIP), and 402–422 (FDIIGNSHQIWHIAIIVGVAF).

It localises to the membrane. This is an uncharacterized protein from Schizosaccharomyces pombe (strain 972 / ATCC 24843) (Fission yeast).